Here is a 152-residue protein sequence, read N- to C-terminus: Cell division protein SepF (152 aa).

Belongs to the SepF family. As to quaternary structure, homodimer. Interacts with FtsZ.

The protein resides in the cytoplasm. Functionally, cell division protein that is part of the divisome complex and is recruited early to the Z-ring. Probably stimulates Z-ring formation, perhaps through the cross-linking of FtsZ protofilaments. Its function overlaps with FtsA. The sequence is that of Cell division protein SepF from Listeria monocytogenes serotype 4b (strain CLIP80459).